The sequence spans 348 residues: Ninja-family protein AFP2 (348 aa).

Residues 186-272 (DSDGGGATGG…VDRKGKGMAT (87 aa)) form a disordered region. Over residues 187-197 (SDGGGATGGGS) the composition is skewed to gly residues. Composition is skewed to polar residues over residues 207–216 (KNQQGSSNSC) and 228–244 (CSSNSGSQGTERPSVTR). Over residues 247–267 (KVNENENEKRVRSEDSVDRKG) the composition is skewed to basic and acidic residues.

This sequence belongs to the Ninja family. As to quaternary structure, forms a homodimer and heterodimer with AFP1 and AFP3. Interacts with ABI5/DPBF1, DPBF2, AREB3/DPBF3, EEL/DPBF4, ABF1, ABF3/DPBF5 and ABF4/AREB2.

The protein resides in the nucleus. Its function is as follows. Acts as a negative regulator of abscisic acid (ABA) response during germination through the ubiquitin-mediated proteolysis of ABI5/DPBF1. The sequence is that of Ninja-family protein AFP2 (AFP2) from Arabidopsis thaliana (Mouse-ear cress).